The sequence spans 978 residues: MASQPPAAVEARLADLCKELGVDEGVAGEAAAVLEEGKGALLASPSFGSKSPEDAEKLCFAFVLYCVSKLKETKAGSSGVRLWEILKGCKLKYDDFFKESQRLASRIDQVLGSRYGSDWEARLELKQLENLVNLLADASRFYCKAFNELFLSPSTDQEPGSTTNIPDYIRFGWLLFLILRSKSPELFKDLVSCIHGLVAILAILLIHVPAKFRSFTIEGSSHLIKQTEKGVDLLPSLCHNYHTSEDRLKEMMGKSYKVIEVFFSRKAINASEFKTVNLDKIDTDGLMYFKDLVDDEIFQSNLEKLEKLSSTTGCQGELDLEMFLTSNDYVLNAENSSGSSANFGCSKRVFETLASPTKTIKNMLAAPSSPSSPANGGSIKIVQMTPVTSAMTTAKWLRDVISSLPDKPSSKLEEFLSSCDTDLTSDVVKRVSIILEAIFPTKSIDRGTSIGLNCANAFDIPWAEARKMEASKLYYRVLEAICRAESQNNNVNNLTPLLSNERFHRCLIACSAELVLATHKTVIMMFPAVLESTGLTAFDLSKIIENFVRHEETLPRELKRHLNSLEEQLLESMSWEKGSSLYNSLVVARPSLSTEINSLGLLAEPMPSLDGIVARQSIHPDGLPPTPSKRWPSAGPDGNCYPQSPKRLCTESRNSLVERNSQTPPPKQSQTGLSILKAKYHPLQATFASPTVSNPVSGNEKCAVVGVQIFFSKILKLAAIRIRNLCERLRHEELTVSVYNIFKQILDQQTALFFNRHVDQIILCCLYGVAKVSQLSLTFKEIVNNYKREPQCKPEVFRSIFVGSTNRNGGFGSRHVDIIVFYNQVFVPTVKPLLVALMPSSTRPEDKRNTNSQIPGSPKSSPFSNLPDMSPKKVSSSHNVYVSPLRQTKMDALLSPSSRSFYACIGESTQAFQSPSKDLAAINSRLNYPTRRINTRINFDMVSDSVVAGSLGQPNGGSASSDPAAAFSPLSKKSKTDS.

The domain A stretch occupies residues T385–L585. The interval T385–P832 is pocket. The segment at V586–V704 is spacer. Positions Q616 to P645 are disordered. The interval V705–P832 is domain B. 2 disordered regions span residues S841–H878 and V947–S978. Polar residues predominate over residues T850–S864. Positions S958–S971 are enriched in low complexity.

Belongs to the retinoblastoma protein (RB) family.

The protein localises to the nucleus. Its function is as follows. Regulator of biological processes that recruits a histone deacetylase to control gene transcription. May play a role in the entry into mitosis, negatively regulating the cell proliferation. Formation of stable complexes with geminiviridae replication-associated proteins may create a cellular environment which favors viral DNA replication. The protein is Retinoblastoma-related protein 2 (RBR2) of Oryza sativa subsp. japonica (Rice).